A 398-amino-acid chain; its full sequence is Alpha-monoglucosyldiacylglycerol synthase (398 aa).

It belongs to the glycosyltransferase group 1 family. Glycosyltransferase 4 subfamily. Mg(2+) serves as cofactor.

It is found in the cell membrane. It catalyses the reaction a 1,2-diacyl-sn-glycerol + UDP-alpha-D-glucose = a 1,2-diacyl-3-O-(alpha-D-glucopyranosyl)-sn-glycerol + UDP + H(+). With respect to regulation, activated by the negatively charged lipids phosphatidylglycerol (PG), cardiolipin (CL), dodecylphosphate-rac-glycerol (PDG), 1,2-dioleoyl-phosphatidylglycerol (DOPG) and phosphatidylserine (PS). Glucosyltransferase involved in the biosynthesis of the non-bilayer-prone membrane lipid alpha-monoglucosyldiacylglycerol. This is a major component for maintaining a certain anionic lipid surface charge density, for balancing the bilayer to non-bilayer phase equilibria and for keeping a constant lipid bilayer spontaneous curvature (curvature packing stress). Catalyzes the transfer of a glucosyl residue from UDP-Glc to diacylglycerol (DAG) acceptor to form the corresponding alpha-glucosyl-DAG (1,2-diacyl-3-O-(alpha-D-glucopyranosyl)-sn-glycerol). It can only use UDP-Glc as sugar donor and DAG is the preferred substrate. The protein is Alpha-monoglucosyldiacylglycerol synthase (mgs) of Acholeplasma laidlawii.